A 151-amino-acid chain; its full sequence is Class I hydrophobin A (151 aa).

The signal sequence occupies residues 1 to 17 (MQFSVAAVLALATAVAA). Intrachain disulfides connect Cys52–Cys125, Cys60–Cys119, Cys61–Cys101, and Cys126–Cys144.

The protein belongs to the fungal hydrophobin family. As to quaternary structure, interacts with cutinase cutL1 in a pH-dependent manner. Self-assembles to form functional amyloid fibrils called rodlets. Self-assembly into fibrillar rodlets occurs spontaneously at hydrophobic:hydrophilic interfaces and the rodlets further associate laterally to form amphipathic monolayers. rolA rodlet formation is regulated by the strength of ionic interactions between rolA molecules. Three types of self-assembled structures of rolA are observed: spherical, rod-like, and mesh-like.

It localises to the secreted. It is found in the cell wall. In terms of biological role, aerial growth, conidiation, and dispersal of filamentous fungi in the environment rely upon a capability of their secreting small amphipathic proteins called hydrophobins (HPBs) with low sequence identity. Class I can self-assemble into an outermost layer of rodlet bundles on aerial cell surfaces, conferring cellular hydrophobicity that supports fungal growth, development and dispersal; whereas Class II form highly ordered films at water-air interfaces through intermolecular interactions but contribute nothing to the rodlet structure. RolA is a class I hydrophobin that undergoes a conformational change after its adsorption to hydrophobic surfaces such as the biodegradable polyester polybutylene succinate-coadipate (PBSA) and recruits the cutinase cutL1, resulting in condensation of cutL1 on the PBSA surface and consequent stimulation of PBSA hydrolysis. Increases also the activity of polyethylene terephthalate hydrolase (PETase) that hydrolyzes polyethylene terephthalate (PET), one of the most well-known polyesters that is widely used as packaging material, when the PET samples are preincubated with the hydrophobin. The wetting effect of rolA probably acts on PET surface to become hydrophilic, which leads PETase easier to contact and attack the surface. The sequence is that of Class I hydrophobin A from Aspergillus oryzae (strain ATCC 42149 / RIB 40) (Yellow koji mold).